The primary structure comprises 130 residues: Small ribosomal subunit protein uS9 (130 aa).

It belongs to the universal ribosomal protein uS9 family.

This Herminiimonas arsenicoxydans protein is Small ribosomal subunit protein uS9.